A 475-amino-acid polypeptide reads, in one-letter code: tRNA modification GTPase MnmE (475 aa).

(6S)-5-formyl-5,6,7,8-tetrahydrofolate is bound by residues arginine 24, glutamate 81, and lysine 124. The region spanning 220 to 397 is the TrmE-type G domain; that stretch reads GLSVVLAGQP…MRSELLRLIG (178 aa). Asparagine 230 lines the K(+) pocket. GTP-binding positions include 230–235, 249–255, 274–277, and 378–380; these read NVGKSS, TPIAGTT, DTAG, and SAR. Serine 234 lines the Mg(2+) pocket. K(+) is bound by residues threonine 249, isoleucine 251, and threonine 254. Threonine 255 serves as a coordination point for Mg(2+). Residue lysine 475 coordinates (6S)-5-formyl-5,6,7,8-tetrahydrofolate.

The protein belongs to the TRAFAC class TrmE-Era-EngA-EngB-Septin-like GTPase superfamily. TrmE GTPase family. As to quaternary structure, homodimer. Heterotetramer of two MnmE and two MnmG subunits. K(+) is required as a cofactor.

The protein localises to the cytoplasm. Functionally, exhibits a very high intrinsic GTPase hydrolysis rate. Involved in the addition of a carboxymethylaminomethyl (cmnm) group at the wobble position (U34) of certain tRNAs, forming tRNA-cmnm(5)s(2)U34. This chain is tRNA modification GTPase MnmE, found in Cupriavidus metallidurans (strain ATCC 43123 / DSM 2839 / NBRC 102507 / CH34) (Ralstonia metallidurans).